The following is a 181-amino-acid chain: ABC transporter E family member 3 (181 aa).

Positions 20–176 constitute an ABC transporter domain; that stretch reads SQIIVMLGEN…KAAFARFHNG (157 aa). 27–34 contacts ATP; sequence GENGTGKT.

This sequence belongs to the ABC transporter superfamily. ABCE family. Mostly expressed in roots and leaves, and, to a lower extent, in stems, flowers and siliques.

This chain is ABC transporter E family member 3 (ABCE3), found in Arabidopsis thaliana (Mouse-ear cress).